Consider the following 872-residue polypeptide: Homeobox-leucine zipper protein ROC6 (872 aa).

Disordered regions lie at residues 28 to 53 and 67 to 130; these read VHNS…GLSL and NRSL…HRHT. A compositionally biased stretch (gly residues) spans 74–85; that stretch reads GNGGSGSGGDGD. Positions 86–99 are enriched in basic and acidic residues; that stretch reads SLGRGREEENDSRS. A compositionally biased stretch (basic residues) spans 119–130; it reads PRKKKKRYHRHT. The homeobox DNA-binding region spans 122–181; that stretch reads KKKRYHRHTPQQIQELEAVFKECPHPDEKQRMELSRRLNLESRQVKFWFQNRRTQMKQTQ. Positions 176–248 form a coiled coil; sequence QMKQTQIERH…LKDELDRVCA (73 aa). An START domain is found at 340–583; sequence GAIDRAVLLE…LQRQCQYLAI (244 aa). The disordered stretch occupies residues 792–818; sequence HNNGASPSPAEVGSGASPNSAAGGGGG.

This sequence belongs to the HD-ZIP homeobox family. Class IV subfamily.

It is found in the nucleus. Functionally, probable transcription factor. The chain is Homeobox-leucine zipper protein ROC6 (ROC6) from Oryza sativa subsp. japonica (Rice).